Here is a 311-residue protein sequence, read N- to C-terminus: 4-hydroxy-tetrahydrodipicolinate synthase (311 aa).

Thr49 provides a ligand contact to pyruvate. Catalysis depends on Tyr138, which acts as the Proton donor/acceptor. Lys166 (schiff-base intermediate with substrate) is an active-site residue. Ile207 provides a ligand contact to pyruvate.

This sequence belongs to the DapA family. In terms of assembly, homotetramer; dimer of dimers.

It is found in the cytoplasm. It carries out the reaction L-aspartate 4-semialdehyde + pyruvate = (2S,4S)-4-hydroxy-2,3,4,5-tetrahydrodipicolinate + H2O + H(+). It participates in amino-acid biosynthesis; L-lysine biosynthesis via DAP pathway; (S)-tetrahydrodipicolinate from L-aspartate: step 3/4. Catalyzes the condensation of (S)-aspartate-beta-semialdehyde [(S)-ASA] and pyruvate to 4-hydroxy-tetrahydrodipicolinate (HTPA). This chain is 4-hydroxy-tetrahydrodipicolinate synthase, found in Lactobacillus acidophilus (strain ATCC 700396 / NCK56 / N2 / NCFM).